The following is a 1303-amino-acid chain: Protein STU1 (1303 aa).

Disordered regions lie at residues 239–259 (RGSD…NTPV), 531–664 (SQRE…GAVS), and 953–977 (EASD…NSEH). Residues 249–259 (RANTPRSNTPV) are compositionally biased toward polar residues. Residues 554-568 (SLKEAILEKNKELRQ) are compositionally biased toward basic and acidic residues. Polar residues predominate over residues 573–583 (SRNSGEQSTKI). Residues 596–609 (SRLEKSLLRPDVGH) are compositionally biased toward basic and acidic residues. The segment covering 618–629 (SSWTYPSTQSGP) has biased composition (polar residues). Over residues 634-648 (KQRERSKTEVHKKSP) the composition is skewed to basic and acidic residues. Polar residues-rich tracts occupy residues 653–664 (RPSSRLDTGAVS) and 955–972 (SDSS…SSKR).

This sequence belongs to the CLASP family. In terms of assembly, interacts with microtubules.

It is found in the cytoplasm. The protein localises to the cytoskeleton. Its subcellular location is the nucleus. It localises to the spindle. Microtubule binding protein that promotes the stabilization of dynamic microtubules. Required for mitotic spindle formation. The chain is Protein STU1 (STU1) from Candida albicans (strain SC5314 / ATCC MYA-2876) (Yeast).